The following is a 269-amino-acid chain: 5'-nucleotidase SurE (269 aa).

The a divalent metal cation site is built by Asp8, Asp9, Ser40, and Asn95.

This sequence belongs to the SurE nucleotidase family. It depends on a divalent metal cation as a cofactor.

The protein localises to the cytoplasm. The enzyme catalyses a ribonucleoside 5'-phosphate + H2O = a ribonucleoside + phosphate. In terms of biological role, nucleotidase that shows phosphatase activity on nucleoside 5'-monophosphates. This chain is 5'-nucleotidase SurE, found in Nitratidesulfovibrio vulgaris (strain DSM 19637 / Miyazaki F) (Desulfovibrio vulgaris).